A 532-amino-acid chain; its full sequence is Carboxypeptidase Y (532 aa).

The N-terminal stretch at 1 to 20 (MKAFTSLLCGLGLSTTLAKA) is a signal peptide. A propeptide spans 21-111 (ISLQRPLGLD…AIENYQLRVN (91 aa)) (mediates translocation across the endoplasmic reticulum, renders the enzyme inactive during transit, and targets the molecule to the vacuole). The Vacuolar targeting signal motif lies at 24 to 27 (QRPL). N-linked (GlcNAc...) (high mannose) asparagine glycosylation is found at N124 and N198. Cystine bridges form between C167/C409, C304/C318, C328/C351, C335/C344, and C373/C379. Residue S257 is part of the active site. The N-linked (GlcNAc...) (high mannose) asparagine glycan is linked to N279. Residue D449 is part of the active site. C452 is a binding site for substrate. N479 carries an N-linked (GlcNAc...) (high mannose) asparagine glycan. H508 is a catalytic residue. M509 provides a ligand contact to substrate.

This sequence belongs to the peptidase S10 family. In terms of processing, enters the endoplasmic reticulum as an inactive zymogen and is modified by four N-linked core oligosaccharides, giving rise to a precursor known as P1 (67 kDa). As P1 transits through the Golgi, extension of its core oligosaccharides leads to the Golgi-modified P2 precursor (69 kDa). P2 is sorted away from secretory proteins at or beyond a late Golgi compartment and is subsequently delivered to the vacuole via a prevacuolar endosome-like compartment. Upon arrival in the vacuole, the N-terminal prosegment of P2 is cleaved by vacuolar proteases to yield the enzymatically active mature vacuolar form of CPY (61 kDa). The four high mannose core N-glycans found in mature CPY are Man(11-15)GlcNAc(2) at Asn-124, Man(8-12)GlcNAc(2) at Asn-198, Man(9-14)GlcNAc(2) at Asn-279 and phosphorylated Man(12-17)GlcNAc(2) as well as Man(11-16)GlcNAc(2) at Asn-479.

The protein resides in the vacuole lumen. It catalyses the reaction Release of a C-terminal amino acid with broad specificity.. Inhibited by ZPCK. Its function is as follows. Vacuolar serine-type carboxypeptidase involved in degradation of small peptides. Digests preferentially peptides containing an aliphatic or hydrophobic residue in P1' position, as well as methionine, leucine or phenylalanine in P1 position of ester substrate. Also plays a role in breakdown of the autophagic body and the autophagosome-dependent protein synthesis. Plays a key role in phytochelatin (PC) synthesis from glutathione (GSH) by cleaving the Gly from GSH and form the PC-peptides of the structure (gamma-Glu-Cys)2-Gly. Also involved in resistance to xenobiotics via the degradation of glutathione-S-conjugates. The chain is Carboxypeptidase Y from Saccharomyces cerevisiae (strain ATCC 204508 / S288c) (Baker's yeast).